Reading from the N-terminus, the 521-residue chain is MTQDKILILDFGSQVTRLIARRVREAHVYCELHSFDMPLDEIKAFNPKGIILSGGPNSVYESDYQADTGIFDLGIPVLGICYGMQFMAHHLGGEVQPGNQREFGYAQVKTIDSGLTRGIQDDAPNTLDVWMSHGDKVSKLPDGFAVIGDTPSCPIAMMENTEKQFYGIQFHPEVTHTKQGRALLNRFVLDICGAQPGWTMPNYIEEAVAKIREQVGSDEVILGLSGGVDSSVAAALIHRAIGDQLTCVFVDHGLLRLNEGKMVMDMFARNLGVKVIHVDAEGQFMAKLAGVTDPEKKRKIIGAEFIEVFDAEEKKLTNAKWLAQGTIYPDVIESAGAKTKKAHAIKSHHNVGGLPENMKLKLLEPLRDLFKDEVRELGVALGLPREMVYRHPFPGPGLGVRILGEVKKEYADLLRQADDIFIQELRNTTDENGTSWYDLTSQAFAVFLPVKSVGVMGDGRTYDYVVALRAVITSDFMTAHWAELPYSLLGRVSNRIINEVKGINRVVYDVSGKPPATIEWE.

The region spanning 5 to 197 (KILILDFGSQ…VLDICGAQPG (193 aa)) is the Glutamine amidotransferase type-1 domain. Catalysis depends on cysteine 81, which acts as the Nucleophile. Active-site residues include histidine 171 and glutamate 173. The 193-residue stretch at 198-390 (WTMPNYIEEA…LGLPREMVYR (193 aa)) folds into the GMPS ATP-PPase domain. An ATP-binding site is contributed by 225-231 (SGGVDSS).

In terms of assembly, homodimer.

It catalyses the reaction XMP + L-glutamine + ATP + H2O = GMP + L-glutamate + AMP + diphosphate + 2 H(+). It participates in purine metabolism; GMP biosynthesis; GMP from XMP (L-Gln route): step 1/1. Functionally, catalyzes the synthesis of GMP from XMP. This Neisseria gonorrhoeae (strain NCCP11945) protein is GMP synthase [glutamine-hydrolyzing].